The primary structure comprises 503 residues: tRNA-2-methylthio-N(6)-dimethylallyladenosine synthase (503 aa).

In terms of domain architecture, MTTase N-terminal spans 5–121; that stretch reads RSYEIRTFGC…LPVLLERARH (117 aa). [4Fe-4S] cluster contacts are provided by Cys-14, Cys-50, Cys-84, Cys-158, Cys-162, and Cys-165. Positions 144-380 constitute a Radical SAM core domain; that stretch reads RESAYAGWVS…IALQEEISLA (237 aa). A TRAM domain is found at 383 to 453; the sequence is RELIGTEVEL…PHHLIADAPV (71 aa).

Belongs to the methylthiotransferase family. MiaB subfamily. As to quaternary structure, monomer. The cofactor is [4Fe-4S] cluster.

The protein localises to the cytoplasm. The enzyme catalyses N(6)-dimethylallyladenosine(37) in tRNA + (sulfur carrier)-SH + AH2 + 2 S-adenosyl-L-methionine = 2-methylsulfanyl-N(6)-dimethylallyladenosine(37) in tRNA + (sulfur carrier)-H + 5'-deoxyadenosine + L-methionine + A + S-adenosyl-L-homocysteine + 2 H(+). Catalyzes the methylthiolation of N6-(dimethylallyl)adenosine (i(6)A), leading to the formation of 2-methylthio-N6-(dimethylallyl)adenosine (ms(2)i(6)A) at position 37 in tRNAs that read codons beginning with uridine. The sequence is that of tRNA-2-methylthio-N(6)-dimethylallyladenosine synthase from Nocardia farcinica (strain IFM 10152).